Reading from the N-terminus, the 308-residue chain is Porphobilinogen deaminase (308 aa).

Residue cysteine 240 is modified to S-(dipyrrolylmethanemethyl)cysteine.

This sequence belongs to the HMBS family. In terms of assembly, monomer. Dipyrromethane is required as a cofactor.

It carries out the reaction 4 porphobilinogen + H2O = hydroxymethylbilane + 4 NH4(+). It participates in porphyrin-containing compound metabolism; protoporphyrin-IX biosynthesis; coproporphyrinogen-III from 5-aminolevulinate: step 2/4. Functionally, tetrapolymerization of the monopyrrole PBG into the hydroxymethylbilane pre-uroporphyrinogen in several discrete steps. The protein is Porphobilinogen deaminase of Campylobacter hominis (strain ATCC BAA-381 / DSM 21671 / CCUG 45161 / LMG 19568 / NCTC 13146 / CH001A).